The chain runs to 163 residues: NADH-quinone oxidoreductase subunit 9 (163 aa).

4Fe-4S ferredoxin-type domains are found at residues 54 to 84 and 94 to 123; these read LRRY…IDAE and TRYD…EGPN. C64, C67, C70, C74, C103, C106, C109, and C113 together coordinate [4Fe-4S] cluster.

Belongs to the complex I 23 kDa subunit family. In terms of assembly, NDH-1 is composed of at least 14 different subunits, Nqo1 to Nqo14. The complex has a L-shaped structure, with the hydrophobic arm (subunits Nqo7, Nqo8, Nqo10 to Nqo14) embedded in the inner membrane and the hydrophilic peripheral arm (subunits Nqo1 to Nqo6, Nqo9) protruding into the bacterial cytoplasm. The hydrophilic domain contains all the redox centers. It depends on [4Fe-4S] cluster as a cofactor.

It localises to the cell inner membrane. It carries out the reaction a quinone + NADH + 5 H(+)(in) = a quinol + NAD(+) + 4 H(+)(out). Its function is as follows. NDH-1 shuttles electrons from NADH, via FMN and iron-sulfur (Fe-S) centers, to quinones in the respiratory chain. The immediate electron acceptor for the enzyme in this species is believed to be ubiquinone. Couples the redox reaction to proton translocation (for every two electrons transferred, four hydrogen ions are translocated across the cytoplasmic membrane), and thus conserves the redox energy in a proton gradient. This is NADH-quinone oxidoreductase subunit 9 from Paracoccus denitrificans.